The chain runs to 102 residues: Small ribosomal subunit protein uS17 (102 aa).

The tract at residues 1–27 is disordered; it reads MEQTEEHTDTHTDEQDEAVDRNDRKER.

Belongs to the universal ribosomal protein uS17 family. Part of the 30S ribosomal subunit.

One of the primary rRNA binding proteins, it binds specifically to the 5'-end of 16S ribosomal RNA. In Salinibacter ruber (strain DSM 13855 / M31), this protein is Small ribosomal subunit protein uS17.